The sequence spans 399 residues: Elongation factor Tu (399 aa).

Residues 10–209 (KPHVNIGTIG…EVDAYIPTPV (200 aa)) form the tr-type G domain. The interval 19–26 (GHVDHGKT) is G1. Residue 19-26 (GHVDHGKT) participates in GTP binding. Thr-26 serves as a coordination point for Mg(2+). The tract at residues 60–64 (GITIA) is G2. Residues 81-84 (DCPG) are G3. GTP is bound by residues 81–85 (DCPGH) and 136–139 (NKQD). The tract at residues 136 to 139 (NKQD) is G4. The segment at 174–176 (SAL) is G5.

Belongs to the TRAFAC class translation factor GTPase superfamily. Classic translation factor GTPase family. EF-Tu/EF-1A subfamily. As to quaternary structure, monomer.

It localises to the cytoplasm. The enzyme catalyses GTP + H2O = GDP + phosphate + H(+). Its function is as follows. GTP hydrolase that promotes the GTP-dependent binding of aminoacyl-tRNA to the A-site of ribosomes during protein biosynthesis. This is Elongation factor Tu from Helicobacter acinonychis (strain Sheeba).